The chain runs to 434 residues: Adenylosuccinate synthetase (434 aa).

Residues 15–21 (GDEGKGK) and 43–45 (GHT) each bind GTP. The active-site Proton acceptor is D16. Positions 16 and 43 each coordinate Mg(2+). IMP is bound by residues 16–19 (DEGK), 41–44 (NAGH), T133, R147, Q228, T243, and R307. Residue H44 is the Proton donor of the active site. 303-309 (SVTGRAR) is a substrate binding site. GTP contacts are provided by residues R309, 335-337 (KLD), and 418-420 (STG).

Belongs to the adenylosuccinate synthetase family. As to quaternary structure, homodimer. The cofactor is Mg(2+).

The protein resides in the cytoplasm. The enzyme catalyses IMP + L-aspartate + GTP = N(6)-(1,2-dicarboxyethyl)-AMP + GDP + phosphate + 2 H(+). It functions in the pathway purine metabolism; AMP biosynthesis via de novo pathway; AMP from IMP: step 1/2. Plays an important role in the de novo pathway of purine nucleotide biosynthesis. Catalyzes the first committed step in the biosynthesis of AMP from IMP. This chain is Adenylosuccinate synthetase, found in Neisseria meningitidis serogroup C / serotype 2a (strain ATCC 700532 / DSM 15464 / FAM18).